Reading from the N-terminus, the 69-residue chain is Cold shock-like protein CspC (69 aa).

One can recognise a CSD domain in the interval 6–66 (GQVKWFNESK…GQKGPAAVNV (61 aa)).

It localises to the cytoplasm. This chain is Cold shock-like protein CspC (cspC), found in Escherichia coli O157:H7.